The sequence spans 165 residues: Small ribosomal subunit protein uS5 (165 aa).

Residues 10-73 form the S5 DRBM domain; sequence LVEKLVAVDR…EAARRNMITV (64 aa).

It belongs to the universal ribosomal protein uS5 family. Part of the 30S ribosomal subunit. Contacts proteins S4 and S8.

In terms of biological role, with S4 and S12 plays an important role in translational accuracy. Located at the back of the 30S subunit body where it stabilizes the conformation of the head with respect to the body. This is Small ribosomal subunit protein uS5 from Acinetobacter baylyi (strain ATCC 33305 / BD413 / ADP1).